Reading from the N-terminus, the 620-residue chain is Chaperone protein HscA homolog (620 aa).

Belongs to the heat shock protein 70 family.

Its function is as follows. Chaperone involved in the maturation of iron-sulfur cluster-containing proteins. Has a low intrinsic ATPase activity which is markedly stimulated by HscB. The chain is Chaperone protein HscA homolog from Pseudomonas fluorescens (strain SBW25).